A 1207-amino-acid chain; its full sequence is Plasma membrane calcium-transporting ATPase 4 (1207 aa).

Topologically, residues 1 to 100 (MTNPTEHTLP…KTFLELVWEA (100 aa)) are cytoplasmic. The residue at position 13 (S13) is a Phosphoserine. Residues 101 to 121 (LQDVTLIILEIAAIISLVLSF) traverse the membrane as a helical segment. Over 122-147 (YRPPGGENEQCGLAVTSPEDEGEAEA) the chain is Extracellular. The helical transmembrane segment at 148 to 168 (GWIEGAAILFSVIIVVLVTAF) threads the bilayer. Over 169-368 (NDWSKEKQFR…LAVQIGKAGL (200 aa)) the chain is Cytoplasmic. Residues 294-317 (EEEKKKKGKKQGVPENRNKAKTQD) form a disordered region. S328 and S334 each carry phosphoserine. The chain crosses the membrane as a helical span at residues 369–389 (IMSAITVLILILYFVIDNFVI). The Extracellular segment spans residues 390–408 (QRRPWLAECTPIYVQYFVK). Residues 409–429 (FFIIGVTVLVVAVPEGLPLAV) traverse the membrane as a helical segment. Over 430–843 (TISLAYSVKK…RNVYDSISKF (414 aa)) the chain is Cytoplasmic. D465 (4-aspartylphosphate intermediate) is an active-site residue. Mg(2+) contacts are provided by D785 and D789. The helical transmembrane segment at 844–864 (LQFQLTVNVVAVIVAFTGACI) threads the bilayer. Residues 865 to 871 (TQDSPLK) lie on the Extracellular side of the membrane. Residues 872 to 892 (AVQMLWVNLIMDTFASLALAT) form a helical membrane-spanning segment. At 893-918 (EPPTDSLLKRRPYGRNKPLISRTMMK) the chain is on the cytoplasmic side. Residues 919–939 (NILGHAVYQLTVIFFLVFAGE) form a helical membrane-spanning segment. The Extracellular portion of the chain corresponds to 940–957 (KFFDIDSGRRAPLHSPPS). Residues 958–977 (QHYTIIFNTFVLMQLFNEIN) form a helical membrane-spanning segment. Over 978 to 994 (SRKIHGERNVFSGIFRN) the chain is Cytoplasmic. Residues 995 to 1015 (LIFCSVVLGTFISQIIIVEFG) traverse the membrane as a helical segment. Residues 1016–1028 (GKPFSCTKLTLSQ) are Extracellular-facing. Residues 1029 to 1049 (WFWCLFIGIGELLWGQVISTI) traverse the membrane as a helical segment. Topologically, residues 1050-1207 (PTQSLKFLKE…SPLHSLETSV (158 aa)) are cytoplasmic. The segment at 1086-1103 (LRRGQILWFRGLNRIQTQ) is calmodulin-binding subdomain A. Phosphothreonine; by PKC is present on T1102. Positions 1104 to 1113 (IKVVKAFHSS) are calmodulin-binding subdomain B. The segment at 1159–1181 (VSKPGTKTSSLDGEVTPQTNKNN) is disordered. Residues 1163–1181 (GTKTSSLDGEVTPQTNKNN) are compositionally biased toward polar residues.

Belongs to the cation transport ATPase (P-type) (TC 3.A.3) family. Type IIB subfamily. As to quaternary structure, interacts with PDZD11. Interacts with SLC35G1 and STIM1. Interacts with calmodulin. In terms of tissue distribution, isoform 1 is detected in brain, heart, liver, testis and epididymis. Isoform 2 is detected in brain (at protein level), heart, seminal vesicle and epididymis. There is a shift in expression from isoform 1 to isoform 2 along the length of the epididymis from caput to cauda (at protein level).

It localises to the cell membrane. The protein resides in the cell projection. The protein localises to the cilium. Its subcellular location is the flagellum membrane. It carries out the reaction Ca(2+)(in) + ATP + H2O = Ca(2+)(out) + ADP + phosphate + H(+). Activated by calcium/calmodulin. Its function is as follows. Calcium/calmodulin-regulated and magnesium-dependent enzyme that catalyzes the hydrolysis of ATP coupled with the transport of calcium out of the cell. By regulating sperm cells calcium homeostasis, may play a role in sperm motility. In Bos taurus (Bovine), this protein is Plasma membrane calcium-transporting ATPase 4.